Here is a 938-residue protein sequence, read N- to C-terminus: MAEKTDYKATLNMPRTDFPMRANLPTREPEQLKKWEEMDLYNLVQRATAGRPKFVLHDGPPYANGDIHLGTALNKILKDIIVKHATMAGYDAPYVPGWDMHGLPIELRALKDMNIDRRKIDPLELRAKCYEYAHHWLNVQREQFKRLGVRGDWENPYRTVAPEFEAKEVEVFGAMAAKGYIYRGLKPVYWCPYCETALAEAEIEYNEKTSYSIYVRFPVVDPRGKLPEGSYLVIWTTTPWTIPANLAVAVHPEVEYGVYATEKGNLVVATALAEKFFQAVNLPAAEPVATLKGADLEGITYRHLLYDRVSPVILGDHVTTEDGTGLVHTAPGHGHEDFEVGQKYGLPVLNPVNDQGVFTAEAGPFAGMFIEKANPEIIKALDEAGMLLGQGKIRHQYAHCWRCKNPVIYRATVQWFVKVEGFMDIAKEAMNHVRWIPDWGYNRMYAMIDGLADWCISRQRAWGLPIPILTCSACDEPSFEPKMFEKIAEIFRAEGSDAWWRRPAEDFMPEGGLTCKKCGGRTFHKEKDILDVWFDSGSSHVGVLETRPELTWPADLYLEGSDQHRGWFKSSLLTAVVARDGKPPYKAVLTHGFTVDEQGRKMSKSLGNVVDPADVIKRYGADILRLWVASTDYRHDMALSENILKQVADAYRKIRNTLRYLLGNLYDFNPDTDMVERDDLLEIDRWQMHRLQEVIRKVTEAYREYEYHIVYHTLNNYCAVDLSAVYLDILKDRLYTSAPASRERRSAQTVLYHVADALIRMLTPILTFTAEEAYSHLPKPAGSPPTSQLLMMPQPDPAYLDENLAAEWDRLMELRDAVQVVLERARVDKLIGSSQEAAVNLYASGGEGSWAELLDRHLPDLPSIFIVSDVKLFVGGQSAPSGTYFGEGPGDLSVEVVRAEGEKCERCWNYRKVGAIEQHPTLCERCAGVVLSLNLDNA.

A 'HIGH' region motif is present at residues 61-71 (PYANGDIHLGT). Glu559 contacts L-isoleucyl-5'-AMP. The short motif at 601–605 (KMSKS) is the 'KMSKS' region element. Lys604 serves as a coordination point for ATP. Residues Cys904, Cys907, Cys923, and Cys926 each contribute to the Zn(2+) site.

It belongs to the class-I aminoacyl-tRNA synthetase family. IleS type 1 subfamily. In terms of assembly, monomer. The cofactor is Zn(2+).

It is found in the cytoplasm. The catalysed reaction is tRNA(Ile) + L-isoleucine + ATP = L-isoleucyl-tRNA(Ile) + AMP + diphosphate. In terms of biological role, catalyzes the attachment of isoleucine to tRNA(Ile). As IleRS can inadvertently accommodate and process structurally similar amino acids such as valine, to avoid such errors it has two additional distinct tRNA(Ile)-dependent editing activities. One activity is designated as 'pretransfer' editing and involves the hydrolysis of activated Val-AMP. The other activity is designated 'posttransfer' editing and involves deacylation of mischarged Val-tRNA(Ile). In Symbiobacterium thermophilum (strain DSM 24528 / JCM 14929 / IAM 14863 / T), this protein is Isoleucine--tRNA ligase.